The primary structure comprises 957 residues: Glycine dehydrogenase (decarboxylating) (957 aa).

Lys-708 bears the N6-(pyridoxal phosphate)lysine mark.

It belongs to the GcvP family. As to quaternary structure, the glycine cleavage system is composed of four proteins: P, T, L and H. It depends on pyridoxal 5'-phosphate as a cofactor.

The enzyme catalyses N(6)-[(R)-lipoyl]-L-lysyl-[glycine-cleavage complex H protein] + glycine + H(+) = N(6)-[(R)-S(8)-aminomethyldihydrolipoyl]-L-lysyl-[glycine-cleavage complex H protein] + CO2. Functionally, the glycine cleavage system catalyzes the degradation of glycine. The P protein binds the alpha-amino group of glycine through its pyridoxal phosphate cofactor; CO(2) is released and the remaining methylamine moiety is then transferred to the lipoamide cofactor of the H protein. The protein is Glycine dehydrogenase (decarboxylating) of Escherichia coli O1:K1 / APEC.